A 273-amino-acid polypeptide reads, in one-letter code: Large ribosomal subunit protein uL2 (273 aa).

The disordered stretch occupies residues 222–273; sequence GVAMNPVDHPMGGGEGRSSGGRHPCTPWGVPTKGYRTRKSKRSDKLIVHRRK. Positions 264–273 are enriched in basic and acidic residues; the sequence is SDKLIVHRRK.

Belongs to the universal ribosomal protein uL2 family. Part of the 50S ribosomal subunit. Forms a bridge to the 30S subunit in the 70S ribosome.

Its function is as follows. One of the primary rRNA binding proteins. Required for association of the 30S and 50S subunits to form the 70S ribosome, for tRNA binding and peptide bond formation. It has been suggested to have peptidyltransferase activity; this is somewhat controversial. Makes several contacts with the 16S rRNA in the 70S ribosome. The sequence is that of Large ribosomal subunit protein uL2 from Syntrophobacter fumaroxidans (strain DSM 10017 / MPOB).